Consider the following 512-residue polypeptide: uncharacterized protein (512 aa).

A run of 2 helical transmembrane segments spans residues 20-40 (IFPVFMVMIIGLISFYAIYIW) and 222-242 (GIALLVVMGVVLILLVIFGYI). A Histidine kinase domain is found at 297 to 512 (EQLIQSIEQT…TLMCYQIPLV (216 aa)). Phosphohistidine; by autocatalysis is present on His325.

Post-translationally, autophosphorylated.

Its subcellular location is the cell membrane. The catalysed reaction is ATP + protein L-histidine = ADP + protein N-phospho-L-histidine.. Its function is as follows. Probable member of the two-component regulatory system SE_0166/SE_0165. May activate SE_0165 by phosphorylation. This is an uncharacterized protein from Staphylococcus epidermidis (strain ATCC 12228 / FDA PCI 1200).